The sequence spans 372 residues: MALRFEILHQSKKSRARVGRIETEHGCIDTPAFVPVATNGALKGVLDHSNIPLMFCNTYHLIVHPGAEAVAAMGGLHQFIGRNAPIITDSGGFQIFSLAYGSVAEEIKSCGKKKGENSIIKINDEGVWFKSYRDGRKLFLSPEVSVQAQKHLGADIIIPLDELLPFHTDPAYFQQSSQRTYAWEKRSLDYHLANPGYQSMYGVIHGGTFPDQRKLGCQFVEDLPFDGSAIGGSLGKNLRDIVGVVDVTTANLSIERPRHLLGIGDLPSIWATVGFGIDSFDSSYPTKAARHGMILTSQGSLKINNQRYASDLNPIEPGCACPACSQGISRAYLRHLFKVHEPNAGIWASIHNMHYMQKIMSKIREKILNDQL.

Aspartate 89 serves as the catalytic Proton acceptor. Substrate is bound by residues 89–93 (DSGGF), aspartate 161, and glycine 232. The segment at 262-268 (GIGDLPS) is RNA binding. The Nucleophile role is filled by aspartate 281. The RNA binding; important for wobble base 34 recognition stretch occupies residues 286 to 290 (TKAAR). Positions 319, 321, 324, and 351 each coordinate Zn(2+).

It belongs to the queuine tRNA-ribosyltransferase family. Homodimer. Within each dimer, one monomer is responsible for RNA recognition and catalysis, while the other monomer binds to the replacement base PreQ1. Zn(2+) is required as a cofactor.

The catalysed reaction is 7-aminomethyl-7-carbaguanine + guanosine(34) in tRNA = 7-aminomethyl-7-carbaguanosine(34) in tRNA + guanine. It participates in tRNA modification; tRNA-queuosine biosynthesis. Catalyzes the base-exchange of a guanine (G) residue with the queuine precursor 7-aminomethyl-7-deazaguanine (PreQ1) at position 34 (anticodon wobble position) in tRNAs with GU(N) anticodons (tRNA-Asp, -Asn, -His and -Tyr). Catalysis occurs through a double-displacement mechanism. The nucleophile active site attacks the C1' of nucleotide 34 to detach the guanine base from the RNA, forming a covalent enzyme-RNA intermediate. The proton acceptor active site deprotonates the incoming PreQ1, allowing a nucleophilic attack on the C1' of the ribose to form the product. After dissociation, two additional enzymatic reactions on the tRNA convert PreQ1 to queuine (Q), resulting in the hypermodified nucleoside queuosine (7-(((4,5-cis-dihydroxy-2-cyclopenten-1-yl)amino)methyl)-7-deazaguanosine). The protein is Queuine tRNA-ribosyltransferase of Chlamydia muridarum (strain MoPn / Nigg).